The chain runs to 230 residues: Ureidoacrylate amidohydrolase RutB (230 aa).

D24 functions as the Proton acceptor in the catalytic mechanism. Residue K133 is part of the active site. Residue C166 is the Nucleophile of the active site.

The protein belongs to the isochorismatase family. RutB subfamily.

The enzyme catalyses (Z)-3-ureidoacrylate + H2O + H(+) = (Z)-3-aminoacrylate + NH4(+) + CO2. It carries out the reaction (Z)-3-ureidoacrylate + H2O = (Z)-3-aminoacrylate + carbamate + H(+). The catalysed reaction is (Z)-2-methylureidoacrylate + H2O + H(+) = (Z)-2-methylaminoacrylate + NH4(+) + CO2. In terms of biological role, hydrolyzes ureidoacrylate to form aminoacrylate and carbamate. The carbamate hydrolyzes spontaneously, thereby releasing one of the nitrogen atoms of the pyrimidine ring as ammonia and one of its carbon atoms as CO2. In Escherichia coli (strain B / BL21-DE3), this protein is Ureidoacrylate amidohydrolase RutB.